A 345-amino-acid polypeptide reads, in one-letter code: MQVQVQEGQTACDGSLRPLPSAGPASFVPRSLRPAPLRGTSTPDRYSRIEKVGEGSYGIVYKCHDNFTGRTVAMKRIPLIVNDGGVPSTAVREVSLLRELNHPYVVRLLDVVLHEAKLLLIFEYMEQDLQGMLKQRNTAFVGGKLRRIMFQLLLGLHECHSRRFVHRDIKPSNILIDRKESVVKLADFGLGRAFRVPLQTYTTEVMTLWYRAPEVLLGDKQYLPAVDVWSMGCVFAELARRRSLFAGDTAINQLFSIFQLLGTPTEATWRGVTSLPHHNVNFPRWTAKPLRTAVPALDDDGVDLLRRMLCYNPRERITAYEALQHSYFDEVREEEVEKLMRFNGA.

The segment at 1–44 (MQVQVQEGQTACDGSLRPLPSAGPASFVPRSLRPAPLRGTSTPD) is disordered. The Protein kinase domain occupies 46 to 328 (YSRIEKVGEG…AYEALQHSYF (283 aa)). Residues 52-60 (VGEGSYGIV) and lysine 75 each bind ATP. Phosphoserine is present on serine 56. At tyrosine 57 the chain carries Phosphotyrosine. Catalysis depends on aspartate 168, which acts as the Proton acceptor.

The protein belongs to the protein kinase superfamily. CMGC Ser/Thr protein kinase family. CDC2/CDKX subfamily. In terms of assembly, forms a stable but non-covalent complex with a regulatory subunit and with a cyclin.

It carries out the reaction L-seryl-[protein] + ATP = O-phospho-L-seryl-[protein] + ADP + H(+). The catalysed reaction is L-threonyl-[protein] + ATP = O-phospho-L-threonyl-[protein] + ADP + H(+). Phosphorylation at Ser-56 or Tyr-57 inactivates the enzyme. Its function is as follows. Probably involved in the control of the cell cycle. The polypeptide is Cell division control protein 2 homolog 2 (CRK2) (Trypanosoma brucei brucei).